The following is a 745-amino-acid chain: Protein transport protein SEC23 D (745 aa).

Zn(2+)-binding residues include C53, C56, C73, and C76. Positions 53 to 76 (CENCYAYFNTYCELDQWAWNCSLC) are zinc finger-like.

This sequence belongs to the SEC23/SEC24 family. SEC24 subfamily. In terms of assembly, component of the coat protein complex II (COPII), composed of at least five proteins: the Sec23/24 complex, the Sec13/31 complex and Sar1. As to expression, mostly expressed in closed floral bud, pollen and flowers, and, to a lower extent, in mature siliques, roots and leaf primordia.

The protein resides in the cytoplasmic vesicle. The protein localises to the COPII-coated vesicle membrane. Its subcellular location is the endoplasmic reticulum membrane. It localises to the membrane. Its function is as follows. Component of the coat protein complex II (COPII) which promotes the formation of transport vesicles from the endoplasmic reticulum (ER). The coat has two main functions, the physical deformation of the endoplasmic reticulum membrane into vesicles and the selection of cargo molecules. May contribute to COPII-coated vesicles formation and ER-Golgi vesicle transport. Together with SEC23A, essential for pollen wall development and exine patterning, probably by regulating endoplasmic reticulum (ER) export of lipids and proteins (e.g. sporopollenin) necessary for pollen wall formation. Also involved in plastid physiology in anther tapetal cells. This chain is Protein transport protein SEC23 D, found in Arabidopsis thaliana (Mouse-ear cress).